The sequence spans 369 residues: Type 2 DNA topoisomerase 6 subunit A (369 aa).

The Topo IIA-type catalytic domain occupies 11–149 (KGDALAREKL…FHMRPEEDGA (139 aa)). Tyrosine 106 acts as the O-(5'-phospho-DNA)-tyrosine intermediate in catalysis. Mg(2+) contacts are provided by glutamate 202 and aspartate 254.

This sequence belongs to the TOP6A family. Homodimer. Heterotetramer of two Top6A and two Top6B chains. Mg(2+) is required as a cofactor.

It catalyses the reaction ATP-dependent breakage, passage and rejoining of double-stranded DNA.. Functionally, relaxes both positive and negative superturns and exhibits a strong decatenase activity. In Methanosarcina mazei (strain ATCC BAA-159 / DSM 3647 / Goe1 / Go1 / JCM 11833 / OCM 88) (Methanosarcina frisia), this protein is Type 2 DNA topoisomerase 6 subunit A.